Reading from the N-terminus, the 159-residue chain is 2-C-methyl-D-erythritol 2,4-cyclodiphosphate synthase (159 aa).

2 residues coordinate a divalent metal cation: Asp8 and His10. 4-CDP-2-C-methyl-D-erythritol 2-phosphate contacts are provided by residues 8–10 (DVH) and 34–35 (HS). Residue His42 participates in a divalent metal cation binding. 4-CDP-2-C-methyl-D-erythritol 2-phosphate is bound by residues 56-58 (DIG), 61-65 (FPDTD), 132-135 (TTTE), Phe139, and Arg142.

Belongs to the IspF family. As to quaternary structure, homotrimer. A divalent metal cation is required as a cofactor.

The enzyme catalyses 4-CDP-2-C-methyl-D-erythritol 2-phosphate = 2-C-methyl-D-erythritol 2,4-cyclic diphosphate + CMP. Its pathway is isoprenoid biosynthesis; isopentenyl diphosphate biosynthesis via DXP pathway; isopentenyl diphosphate from 1-deoxy-D-xylulose 5-phosphate: step 4/6. Functionally, involved in the biosynthesis of isopentenyl diphosphate (IPP) and dimethylallyl diphosphate (DMAPP), two major building blocks of isoprenoid compounds. Catalyzes the conversion of 4-diphosphocytidyl-2-C-methyl-D-erythritol 2-phosphate (CDP-ME2P) to 2-C-methyl-D-erythritol 2,4-cyclodiphosphate (ME-CPP) with a corresponding release of cytidine 5-monophosphate (CMP). This chain is 2-C-methyl-D-erythritol 2,4-cyclodiphosphate synthase, found in Finegoldia magna (strain ATCC 29328 / DSM 20472 / WAL 2508) (Peptostreptococcus magnus).